Here is a 98-residue protein sequence, read N- to C-terminus: ESAT-6-like protein EsxJ (98 aa).

The protein belongs to the WXG100 family. CFP-10 subfamily.

The protein resides in the secreted. The sequence is that of ESAT-6-like protein EsxJ from Mycobacterium bovis (strain ATCC BAA-935 / AF2122/97).